Consider the following 122-residue polypeptide: Small ribosomal subunit protein uS13 (122 aa).

Positions 94-122 (KQLPVRGQRTHTNARTRKGKAKPIAGKKK) are disordered.

Belongs to the universal ribosomal protein uS13 family. As to quaternary structure, part of the 30S ribosomal subunit. Forms a loose heterodimer with protein S19. Forms two bridges to the 50S subunit in the 70S ribosome.

In terms of biological role, located at the top of the head of the 30S subunit, it contacts several helices of the 16S rRNA. In the 70S ribosome it contacts the 23S rRNA (bridge B1a) and protein L5 of the 50S subunit (bridge B1b), connecting the 2 subunits; these bridges are implicated in subunit movement. Contacts the tRNAs in the A and P-sites. This is Small ribosomal subunit protein uS13 from Methylorubrum extorquens (strain PA1) (Methylobacterium extorquens).